A 450-amino-acid polypeptide reads, in one-letter code: Tubulin alpha chain (450 aa).

Q11 is a GTP binding site. K40 carries the N6-acetyllysine modification. E71, S140, G144, T145, T179, N206, and N228 together coordinate GTP. E71 lines the Mg(2+) pocket. The active site involves E254.

This sequence belongs to the tubulin family. Dimer of alpha and beta chains. A typical microtubule is a hollow water-filled tube with an outer diameter of 25 nm and an inner diameter of 15 nM. Alpha-beta heterodimers associate head-to-tail to form protofilaments running lengthwise along the microtubule wall with the beta-tubulin subunit facing the microtubule plus end conferring a structural polarity. Microtubules usually have 13 protofilaments but different protofilament numbers can be found in some organisms and specialized cells. Mg(2+) is required as a cofactor. Acetylation of alpha chains at Lys-40 stabilizes microtubules and affects affinity and processivity of microtubule motors. This modification has a role in multiple cellular functions, ranging from cell motility, cell cycle progression or cell differentiation to intracellular trafficking and signaling.

The protein resides in the cytoplasm. It localises to the cytoskeleton. It carries out the reaction GTP + H2O = GDP + phosphate + H(+). In terms of biological role, tubulin is the major constituent of microtubules, a cylinder consisting of laterally associated linear protofilaments composed of alpha- and beta-tubulin heterodimers. Microtubules grow by the addition of GTP-tubulin dimers to the microtubule end, where a stabilizing cap forms. Below the cap, tubulin dimers are in GDP-bound state, owing to GTPase activity of alpha-tubulin. The chain is Tubulin alpha chain from Euplotoides octocarinatus (Freshwater ciliate).